The sequence spans 450 residues: MFS-type transporter avaK (450 aa).

The next 8 helical transmembrane spans lie at 18-38, 100-120, 148-168, 171-191, 244-264, 280-300, 329-349, and 408-428; these read VMAL…LSMP, RVVC…SGLL, AVAL…AAPA, ALVA…MLFV, APII…HFLL, LVLV…MPAA, FGFF…ALAF, and GWLG…LVAV.

Belongs to the major facilitator superfamily.

The protein localises to the membrane. Its pathway is secondary metabolite biosynthesis. Functionally, MFS-type transporter; part of the cluster that mediates the biosynthesis of a highly modified cyclo-arginine-tryptophan dipeptide (cRW). This Aspergillus versicolor protein is MFS-type transporter avaK.